The primary structure comprises 47 residues: Large ribosomal subunit protein eL40 (47 aa).

It belongs to the eukaryotic ribosomal protein eL40 family.

The chain is Large ribosomal subunit protein eL40 from Halobacterium salinarum (strain ATCC 29341 / DSM 671 / R1).